The following is a 779-amino-acid chain: Phosphoribosylformylglycinamidine synthase subunit PurL (779 aa).

Histidine 52 is a catalytic residue. ATP is bound by residues tyrosine 55 and lysine 94. Glutamate 96 is a binding site for Mg(2+). Residues 97–100 (SHNH) and arginine 119 contribute to the substrate site. Histidine 98 serves as the catalytic Proton acceptor. Aspartate 120 lines the Mg(2+) pocket. Residue glutamine 243 participates in substrate binding. Aspartate 271 serves as a coordination point for Mg(2+). Position 315–317 (315–317 (ESQ)) interacts with substrate. Asparagine 523 and glycine 560 together coordinate ATP. Asparagine 561 contacts Mg(2+). Serine 563 serves as a coordination point for substrate.

It belongs to the FGAMS family. As to quaternary structure, monomer. Part of the FGAM synthase complex composed of 1 PurL, 1 PurQ and 2 PurS subunits.

Its subcellular location is the cytoplasm. The catalysed reaction is N(2)-formyl-N(1)-(5-phospho-beta-D-ribosyl)glycinamide + L-glutamine + ATP + H2O = 2-formamido-N(1)-(5-O-phospho-beta-D-ribosyl)acetamidine + L-glutamate + ADP + phosphate + H(+). It functions in the pathway purine metabolism; IMP biosynthesis via de novo pathway; 5-amino-1-(5-phospho-D-ribosyl)imidazole from N(2)-formyl-N(1)-(5-phospho-D-ribosyl)glycinamide: step 1/2. In terms of biological role, part of the phosphoribosylformylglycinamidine synthase complex involved in the purines biosynthetic pathway. Catalyzes the ATP-dependent conversion of formylglycinamide ribonucleotide (FGAR) and glutamine to yield formylglycinamidine ribonucleotide (FGAM) and glutamate. The FGAM synthase complex is composed of three subunits. PurQ produces an ammonia molecule by converting glutamine to glutamate. PurL transfers the ammonia molecule to FGAR to form FGAM in an ATP-dependent manner. PurS interacts with PurQ and PurL and is thought to assist in the transfer of the ammonia molecule from PurQ to PurL. In Prochlorococcus marinus (strain MIT 9215), this protein is Phosphoribosylformylglycinamidine synthase subunit PurL.